Consider the following 690-residue polypeptide: Elongation factor G (690 aa).

In terms of domain architecture, tr-type G spans Asp-8–Leu-282. GTP is bound by residues Ala-17–Thr-24, Asp-81–His-85, and Asn-135–Asp-138.

This sequence belongs to the TRAFAC class translation factor GTPase superfamily. Classic translation factor GTPase family. EF-G/EF-2 subfamily.

It is found in the cytoplasm. Its function is as follows. Catalyzes the GTP-dependent ribosomal translocation step during translation elongation. During this step, the ribosome changes from the pre-translocational (PRE) to the post-translocational (POST) state as the newly formed A-site-bound peptidyl-tRNA and P-site-bound deacylated tRNA move to the P and E sites, respectively. Catalyzes the coordinated movement of the two tRNA molecules, the mRNA and conformational changes in the ribosome. This is Elongation factor G from Caldanaerobacter subterraneus subsp. tengcongensis (strain DSM 15242 / JCM 11007 / NBRC 100824 / MB4) (Thermoanaerobacter tengcongensis).